Consider the following 274-residue polypeptide: MAIHLYKTSTPSTRNGAVDSQVKSNLRNNLISGQHRCGKGRNARGIITAGHRGGGHKRLYRKIDFRRNEKDISGRIVTIEYDPNRNAYICLIHYGDGEKRYILHPRGAIIGDTIVSGTEVPISMGNALPLSTDMPLGTAIHNIEITLGKGGQLARAAGAVAKLIAKEGKSATLRLPSGEVRLISKNCLATVGQVGNVGVNQKSLGRAGSKCWLGKRPVVRGVVMNPVDHPHGGGEGRAPIGRKKPTTPWGYPALGRRSRKRKKYSDSFILRRRK.

The tract at residues 225-274 (NPVDHPHGGGEGRAPIGRKKPTTPWGYPALGRRSRKRKKYSDSFILRRRK) is disordered.

Belongs to the universal ribosomal protein uL2 family. In terms of assembly, part of the 50S ribosomal subunit.

The protein resides in the plastid. It localises to the chloroplast. This chain is Large ribosomal subunit protein uL2cz/uL2cy (rpl2-A), found in Dioscorea elephantipes (Elephant's foot yam).